We begin with the raw amino-acid sequence, 299 residues long: 4-hydroxybenzoate octaprenyltransferase (299 aa).

The next 8 membrane-spanning stretches (helical) occupy residues 33-53, 56-76, 107-127, 151-171, 180-200, 213-233, 247-267, and 278-298; these read VGFLLLLWPTWWALWLAADGV, WWTLCVFTTGIWLTRSAGCVI, LLMFATLMLIAFGLVLTMNQL, LPQVYLGLAFGWGIPMAFAAI, WLLYIANILWTTAYDTWYAMV, IAILFAELDLVVQGVLYTLML, HTYWISLISAVALIGYQFIIA, and AFMHNNWVGMTIFAGIALATT.

Belongs to the UbiA prenyltransferase family. Mg(2+) serves as cofactor.

The protein resides in the cell inner membrane. The catalysed reaction is all-trans-octaprenyl diphosphate + 4-hydroxybenzoate = 4-hydroxy-3-(all-trans-octaprenyl)benzoate + diphosphate. Its pathway is cofactor biosynthesis; ubiquinone biosynthesis. In terms of biological role, catalyzes the prenylation of para-hydroxybenzoate (PHB) with an all-trans polyprenyl group. Mediates the second step in the final reaction sequence of ubiquinone-8 (UQ-8) biosynthesis, which is the condensation of the polyisoprenoid side chain with PHB, generating the first membrane-bound Q intermediate 3-octaprenyl-4-hydroxybenzoate. The chain is 4-hydroxybenzoate octaprenyltransferase from Xylella fastidiosa (strain M12).